A 227-amino-acid chain; its full sequence is MADLLGSILSSMEKPPSLGDQESRRKAREQAARLKKLQEQDKQQKVEFRKRMEKEVSDFIQDSGQVKKKFQPMNKIERSILHDVVEVAGLTSFSFGEDDDCRYVMIFKKEFAPSDEELDSYRHGEEWDPQKAEEKRKLKELAQKQEEEAAQQGPAVVSPASDYKDKYSHLIGKGAAKDAAHMLQANKTYGCVPVANKRDTRSIEEAMNEIRAKKRLRQSGEELPTTS.

The disordered stretch occupies residues 1–45 (MADLLGSILSSMEKPPSLGDQESRRKAREQAARLKKLQEQDKQQK). Residue alanine 2 is modified to N-acetylalanine. Residues 21-45 (QESRRKAREQAARLKKLQEQDKQQK) are compositionally biased toward basic and acidic residues. The short motif at 35–51 (KKLQEQDKQQKVEFRKR) is the Nuclear localization signal element. The region spanning 46-109 (VEFRKRMEKE…DCRYVMIFKK (64 aa)) is the R3H domain. Serine 114 carries the post-translational modification Phosphoserine. The segment at 118–161 (LDSYRHGEEWDPQKAEEKRKLKELAQKQEEEAAQQGPAVVSPAS) is disordered. The span at 119–147 (DSYRHGEEWDPQKAEEKRKLKELAQKQEE) shows a compositional bias: basic and acidic residues. The Nuclear localization signal signature appears at 122 to 139 (RHGEEWDPQKAEEKRKLK). Serine 158 and serine 202 each carry phosphoserine.

Its subcellular location is the nucleus. The sequence is that of Sperm-associated antigen 7 (Spag7) from Mus musculus (Mouse).